Reading from the N-terminus, the 88-residue chain is Large ribosomal subunit protein bL27 (88 aa).

A disordered region spans residues 1–21 (MAHKKGASSSRNGRDSAAHRL).

It belongs to the bacterial ribosomal protein bL27 family.

This chain is Large ribosomal subunit protein bL27, found in Mycobacterium ulcerans (strain Agy99).